We begin with the raw amino-acid sequence, 383 residues long: ATP phosphoribosyltransferase regulatory subunit (383 aa).

This sequence belongs to the class-II aminoacyl-tRNA synthetase family. HisZ subfamily. Heteromultimer composed of HisG and HisZ subunits.

Its subcellular location is the cytoplasm. It functions in the pathway amino-acid biosynthesis; L-histidine biosynthesis; L-histidine from 5-phospho-alpha-D-ribose 1-diphosphate: step 1/9. In terms of biological role, required for the first step of histidine biosynthesis. May allow the feedback regulation of ATP phosphoribosyltransferase activity by histidine. This chain is ATP phosphoribosyltransferase regulatory subunit, found in Neisseria meningitidis serogroup C / serotype 2a (strain ATCC 700532 / DSM 15464 / FAM18).